A 305-amino-acid polypeptide reads, in one-letter code: Exosome complex component RRP45 (305 aa).

It belongs to the RNase PH family. As to quaternary structure, component of the RNA exosome complex. Specifically part of the catalytically inactive RNA exosome core complex (Exo-9) which may associate with the catalytic subunits RRP6 and DIS3 in cytoplasmic- and nuclear-specific RNA exosome complex forms. Exo-9 is formed by a hexameric base ring of RNase PH domain-containing subunits and a cap ring consisting of CSL4, RRP4 and RRP40. Interacts with LRP1.

It localises to the cytoplasm. The protein resides in the nucleus. The protein localises to the nucleolus. Functionally, non-catalytic component of the RNA exosome complex which has 3'-&gt;5' exoribonuclease activity and participates in a multitude of cellular RNA processing and degradation events. In the nucleus, the RNA exosome complex is involved in proper maturation of stable RNA species such as rRNA, snRNA and snoRNA, in the elimination of RNA processing by-products and non-coding 'pervasive' transcripts, such as antisense RNA species and cryptic unstable transcripts (CUTs), and of mRNAs with processing defects, thereby limiting or excluding their export to the cytoplasm. In the cytoplasm, the RNA exosome complex is involved in general mRNA turnover and in RNA surveillance pathways, preventing translation of aberrant mRNAs. The catalytic inactive RNA exosome core complex of 9 subunits (Exo-9) is proposed to play a pivotal role in the binding and presentation of RNA for ribonucleolysis, and to serve as a scaffold for the association with catalytic subunits and accessory proteins or complexes. RRP45 is part of the hexameric ring of RNase PH domain-containing subunits proposed to form a central channel which threads RNA substrates for degradation. This Saccharomyces cerevisiae (strain ATCC 204508 / S288c) (Baker's yeast) protein is Exosome complex component RRP45 (RRP45).